Here is a 237-residue protein sequence, read N- to C-terminus: tRNA1(Val) (adenine(37)-N6)-methyltransferase (237 aa).

This sequence belongs to the methyltransferase superfamily. tRNA (adenine-N(6)-)-methyltransferase family.

Its subcellular location is the cytoplasm. The enzyme catalyses adenosine(37) in tRNA1(Val) + S-adenosyl-L-methionine = N(6)-methyladenosine(37) in tRNA1(Val) + S-adenosyl-L-homocysteine + H(+). In terms of biological role, specifically methylates the adenine in position 37 of tRNA(1)(Val) (anticodon cmo5UAC). In Parabacteroides distasonis (strain ATCC 8503 / DSM 20701 / CIP 104284 / JCM 5825 / NCTC 11152), this protein is tRNA1(Val) (adenine(37)-N6)-methyltransferase.